A 230-amino-acid chain; its full sequence is 5'-methylthioadenosine/S-adenosylhomocysteine nucleosidase (230 aa).

E12 (proton acceptor) is an active-site residue. Substrate-binding positions include G78, I152, and 173-174 (ME). Residue D197 is the Proton donor of the active site.

Belongs to the PNP/UDP phosphorylase family. MtnN subfamily.

The enzyme catalyses S-adenosyl-L-homocysteine + H2O = S-(5-deoxy-D-ribos-5-yl)-L-homocysteine + adenine. It catalyses the reaction S-methyl-5'-thioadenosine + H2O = 5-(methylsulfanyl)-D-ribose + adenine. The catalysed reaction is 5'-deoxyadenosine + H2O = 5-deoxy-D-ribose + adenine. It participates in amino-acid biosynthesis; L-methionine biosynthesis via salvage pathway; S-methyl-5-thio-alpha-D-ribose 1-phosphate from S-methyl-5'-thioadenosine (hydrolase route): step 1/2. Functionally, catalyzes the irreversible cleavage of the glycosidic bond in both 5'-methylthioadenosine (MTA) and S-adenosylhomocysteine (SAH/AdoHcy) to adenine and the corresponding thioribose, 5'-methylthioribose and S-ribosylhomocysteine, respectively. Also cleaves 5'-deoxyadenosine, a toxic by-product of radical S-adenosylmethionine (SAM) enzymes, into 5-deoxyribose and adenine. The sequence is that of 5'-methylthioadenosine/S-adenosylhomocysteine nucleosidase from Actinobacillus succinogenes (strain ATCC 55618 / DSM 22257 / CCUG 43843 / 130Z).